The primary structure comprises 482 residues: UDP-N-acetylmuramate--L-alanine ligase (482 aa).

111–117 (GTHGKTT) contacts ATP.

This sequence belongs to the MurCDEF family.

It localises to the cytoplasm. It carries out the reaction UDP-N-acetyl-alpha-D-muramate + L-alanine + ATP = UDP-N-acetyl-alpha-D-muramoyl-L-alanine + ADP + phosphate + H(+). It functions in the pathway cell wall biogenesis; peptidoglycan biosynthesis. Its function is as follows. Cell wall formation. This chain is UDP-N-acetylmuramate--L-alanine ligase, found in Symbiobacterium thermophilum (strain DSM 24528 / JCM 14929 / IAM 14863 / T).